The sequence spans 102 residues: Small ribosomal subunit protein uS10 (102 aa).

It belongs to the universal ribosomal protein uS10 family. Part of the 30S ribosomal subunit.

In terms of biological role, involved in the binding of tRNA to the ribosomes. In Oceanobacillus iheyensis (strain DSM 14371 / CIP 107618 / JCM 11309 / KCTC 3954 / HTE831), this protein is Small ribosomal subunit protein uS10.